The following is a 136-amino-acid chain: Large ribosomal subunit protein bL17 (136 aa).

This sequence belongs to the bacterial ribosomal protein bL17 family. In terms of assembly, part of the 50S ribosomal subunit. Contacts protein L32.

This chain is Large ribosomal subunit protein bL17, found in Rhodopseudomonas palustris (strain BisB5).